Here is a 155-residue protein sequence, read N- to C-terminus: 17.4 kDa class III heat shock protein (155 aa).

The sHSP domain maps to 35–155 (GRGSSNNIPI…KPKTVQIAVS (121 aa)).

It belongs to the small heat shock protein (HSP20) family. May form oligomeric structures.

The protein resides in the cytoplasm. The protein is 17.4 kDa class III heat shock protein (HSP17.4B) of Arabidopsis thaliana (Mouse-ear cress).